A 93-amino-acid chain; its full sequence is Cell division topological specificity factor (93 aa).

Belongs to the MinE family.

Functionally, prevents the cell division inhibition by proteins MinC and MinD at internal division sites while permitting inhibition at polar sites. This ensures cell division at the proper site by restricting the formation of a division septum at the midpoint of the long axis of the cell. The polypeptide is Cell division topological specificity factor (Synechococcus sp. (strain WH7803)).